The following is a 919-amino-acid chain: Transcriptional regulatory protein EDS1 (919 aa).

A disordered region spans residues 1 to 54; it reads MSHHVPNLYGTPIRDPHEHKRNSASMGEVNQSVSSRNCERGSEKGTKQRKKASR. The span at 23 to 36 shows a compositional bias: polar residues; that stretch reads SASMGEVNQSVSSR. Residues 37-46 show a composition bias toward basic and acidic residues; that stretch reads NCERGSEKGT. Positions 56–85 form a DNA-binding region, zn(2)-C6 fungal-type; that stretch reads CDQCRRKRIKCRFDKHTGVCQGCLEVGEKC. The interval 297-338 is disordered; the sequence is AGCPNKKLGTDGRSDKWDKNSTWKPVYRSSNPSHPSTEKNVS. Positions 304–317 are enriched in basic and acidic residues; that stretch reads LGTDGRSDKWDKNS. The span at 318 to 338 shows a compositional bias: polar residues; the sequence is TWKPVYRSSNPSHPSTEKNVS.

In terms of assembly, binds DNA in a sequence-specific manner.

The protein resides in the nucleus. This Saccharomyces cerevisiae (strain Lalvin EC1118 / Prise de mousse) (Baker's yeast) protein is Transcriptional regulatory protein EDS1 (EDS1).